Consider the following 466-residue polypeptide: Bifunctional protein GlmU (466 aa).

The interval 1 to 236 is pyrophosphorylase; the sequence is MEVMPQPLTI…PAEALGINDR (236 aa). UDP-N-acetyl-alpha-D-glucosamine contacts are provided by residues 13 to 16, K27, Q79, 84 to 85, 107 to 109, G146, E161, N176, and N234; these read LAAG, GT, and YGD. Position 109 (D109) interacts with Mg(2+). N234 lines the Mg(2+) pocket. The tract at residues 237–257 is linker; that stretch reads AQLAEVDRIFRDRKRRAVMAA. An N-acetyltransferase region spans residues 258–466; sequence GVTLIQPETI…AKKRRKLAKT (209 aa). UDP-N-acetyl-alpha-D-glucosamine-binding residues include R340 and K358. The active-site Proton acceptor is the H370. UDP-N-acetyl-alpha-D-glucosamine-binding residues include Y373 and N384. Acetyl-CoA contacts are provided by residues A387, 393-394, S412, A430, and R447; that span reads NY.

In the N-terminal section; belongs to the N-acetylglucosamine-1-phosphate uridyltransferase family. It in the C-terminal section; belongs to the transferase hexapeptide repeat family. As to quaternary structure, homotrimer. Requires Mg(2+) as cofactor.

The protein localises to the cytoplasm. It carries out the reaction alpha-D-glucosamine 1-phosphate + acetyl-CoA = N-acetyl-alpha-D-glucosamine 1-phosphate + CoA + H(+). The catalysed reaction is N-acetyl-alpha-D-glucosamine 1-phosphate + UTP + H(+) = UDP-N-acetyl-alpha-D-glucosamine + diphosphate. It functions in the pathway nucleotide-sugar biosynthesis; UDP-N-acetyl-alpha-D-glucosamine biosynthesis; N-acetyl-alpha-D-glucosamine 1-phosphate from alpha-D-glucosamine 6-phosphate (route II): step 2/2. It participates in nucleotide-sugar biosynthesis; UDP-N-acetyl-alpha-D-glucosamine biosynthesis; UDP-N-acetyl-alpha-D-glucosamine from N-acetyl-alpha-D-glucosamine 1-phosphate: step 1/1. The protein operates within bacterial outer membrane biogenesis; LPS lipid A biosynthesis. Catalyzes the last two sequential reactions in the de novo biosynthetic pathway for UDP-N-acetylglucosamine (UDP-GlcNAc). The C-terminal domain catalyzes the transfer of acetyl group from acetyl coenzyme A to glucosamine-1-phosphate (GlcN-1-P) to produce N-acetylglucosamine-1-phosphate (GlcNAc-1-P), which is converted into UDP-GlcNAc by the transfer of uridine 5-monophosphate (from uridine 5-triphosphate), a reaction catalyzed by the N-terminal domain. This chain is Bifunctional protein GlmU, found in Solibacter usitatus (strain Ellin6076).